Here is a 570-residue protein sequence, read N- to C-terminus: Peptidyl-prolyl cis-trans isomerase FKBP9 (570 aa).

An N-terminal signal peptide occupies residues 1–24; that stretch reads MAFRGWRPPPPPLLLLLLWVTGQA. 4 PPIase FKBP-type domains span residues 54-142, 166-254, 278-365, and 389-477; these read GDFV…MDIW, SDFV…LDLH, GDFL…IDFH, and GDYL…LELV. Asn174, Asn286, Asn302, and Asn397 each carry an N-linked (GlcNAc...) asparagine glycan. 2 EF-hand domains span residues 488–523 and 533–568; these read WNGEVSPNLFEEIDKDGNGEVLLEEFSEYIHAQVAS and DAELIVKNMFTNQDRNGDGKVTAEEFKLKDQEAKHD. Positions 501, 503, 505, 507, 512, 546, 548, 550, 552, and 557 each coordinate Ca(2+). Positions 567 to 570 match the Prevents secretion from ER motif; it reads HDEL.

Phosphorylated.

It localises to the endoplasmic reticulum. It carries out the reaction [protein]-peptidylproline (omega=180) = [protein]-peptidylproline (omega=0). With respect to regulation, inhibited by FK506. Functionally, PPIases accelerate the folding of proteins during protein synthesis. In Homo sapiens (Human), this protein is Peptidyl-prolyl cis-trans isomerase FKBP9 (FKBP9).